The following is a 2079-amino-acid chain: von Willebrand factor A domain-containing protein DDB_G0286969 (2079 aa).

Positions 11–147 (EQILPSFISI…ELEIIITYST (137 aa)) constitute a VIT domain. Residues 178-203 (NENSTTNTNTQTQPQSVNTTTTTTPS) are disordered. Residues 180–203 (NSTTNTNTQTQPQSVNTTTTTTPS) show a composition bias toward low complexity. The region spanning 354–525 (ELIFLVDVSE…KVMRQLKRAL (172 aa)) is the VWFA domain. 5 disordered regions span residues 761–800 (PTTL…LKTP), 832–866 (PFVP…TEVK), 956–1139 (AKPV…TKPT), 1155–1203 (NEPA…VSST), and 1239–1294 (DSNT…ADAE). 3 stretches are compositionally biased toward low complexity: residues 785–800 (TTQQ…LKTP), 841–866 (PTTT…TEVK), and 956–973 (AKPV…QQTK). Residues 923-957 (EMIKIAEAKAAAEQKAAAEQKAIADAKAAAEQAAK) are a coiled coil. The span at 974 to 989 (PKADKQSKQNAKDNKQ) shows a compositional bias: basic and acidic residues. Residues 992–1006 (KPVVVEQKPPVVTET) show a composition bias toward low complexity. Residues 1007–1021 (KPTVATESATPTKPT) are compositionally biased toward polar residues. Low complexity predominate over residues 1023–1061 (AQAAAAAAAAAQQAAQQAAATTPVKQQPTKQTTPNKSTP). The span at 1092–1111 (KPVETKPVEQTKPVETKPVE) shows a compositional bias: basic and acidic residues. Over residues 1176–1198 (NNNNNNNNNNNNNNNNNNNNNNN) the composition is skewed to low complexity. The segment covering 1239–1272 (DSNTKAPDSLKTTPIFSNGPQGISPSSGNGSNKS) has biased composition (polar residues). Over residues 1280–1292 (DRGGRGGRDRNAD) the composition is skewed to basic and acidic residues. The MIF4G domain maps to 1317-1527 (LKKFKFNLNR…LDLIDLRANK (211 aa)). Positions 1530-1755 (PKNSTQTKTK…PAPVEPVKPK (226 aa)) are disordered. 3 stretches are compositionally biased toward basic and acidic residues: residues 1538-1550 (TKKD…ERFI), 1557-1599 (QKRE…RDAP), and 1621-1634 (NNRD…DRSG). 2 stretches are compositionally biased toward low complexity: residues 1635–1659 (GKQS…LFGS) and 1688–1699 (SSSIPSIPNRSN). Residues 1725-1740 (SNDRDSRGPSKPDNRK) show a composition bias toward basic and acidic residues. In terms of domain architecture, MI spans 1760-1882 (KIEDDISMTL…PLNYLEEAYA (123 aa)).

This is von Willebrand factor A domain-containing protein DDB_G0286969 from Dictyostelium discoideum (Social amoeba).